Here is a 107-residue protein sequence, read N- to C-terminus: Integration host factor subunit alpha (107 aa).

It belongs to the bacterial histone-like protein family. As to quaternary structure, heterodimer of an alpha and a beta chain.

In terms of biological role, this protein is one of the two subunits of integration host factor, a specific DNA-binding protein that functions in genetic recombination as well as in transcriptional and translational control. The polypeptide is Integration host factor subunit alpha (Bartonella tribocorum (strain CIP 105476 / IBS 506)).